Reading from the N-terminus, the 206-residue chain is Small ribosomal subunit protein uS4 (206 aa).

Residues 96-168 (SRLDNVVYRM…LELAEQREKP (73 aa)) enclose the S4 RNA-binding domain.

Belongs to the universal ribosomal protein uS4 family. Part of the 30S ribosomal subunit. Contacts protein S5. The interaction surface between S4 and S5 is involved in control of translational fidelity.

Functionally, one of the primary rRNA binding proteins, it binds directly to 16S rRNA where it nucleates assembly of the body of the 30S subunit. In terms of biological role, with S5 and S12 plays an important role in translational accuracy. The chain is Small ribosomal subunit protein uS4 from Baumannia cicadellinicola subsp. Homalodisca coagulata.